Here is a 123-residue protein sequence, read N- to C-terminus: Ribosome-binding factor A (123 aa).

This sequence belongs to the RbfA family. In terms of assembly, monomer. Binds 30S ribosomal subunits, but not 50S ribosomal subunits or 70S ribosomes.

The protein localises to the cytoplasm. Its function is as follows. One of several proteins that assist in the late maturation steps of the functional core of the 30S ribosomal subunit. Associates with free 30S ribosomal subunits (but not with 30S subunits that are part of 70S ribosomes or polysomes). Required for efficient processing of 16S rRNA. May interact with the 5'-terminal helix region of 16S rRNA. The polypeptide is Ribosome-binding factor A (Ralstonia pickettii (strain 12J)).